The following is a 950-amino-acid chain: A disintegrin and metalloproteinase with thrombospondin motifs 15 (950 aa).

The signal sequence occupies residues 1–17; sequence MLLLGILTLAFAGRTAG. A propeptide spanning residues 18-212 is cleaved from the precursor; it reads GSEPEREVVV…SRRRSGRAKR (195 aa). An N-linked (GlcNAc...) asparagine glycan is attached at N141. The disordered stretch occupies residues 151-172; the sequence is SQGAHLLQRRGVPGGPSGDPTS. A Cysteine switch motif is present at residues 172–179; sequence SRCGVASG. C174 contributes to the Zn(2+) binding site. Residues 218–427 enclose the Peptidase M12B domain; that stretch reads RYVETLVVAD…GHGDCLLDQP (210 aa). Cystine bridges form between C293–C345, C322–C327, C339–C422, C377–C406, C448–C470, C459–C480, C465–C499, C493–C504, C528–C565, C532–C570, and C543–C555. H361 contributes to the Zn(2+) binding site. E362 is a catalytic residue. Zn(2+) contacts are provided by H365 and H371. In terms of domain architecture, Disintegrin spans 428–515; the sequence is SKPISLPEDL…ERHNLNKHRV (88 aa). One can recognise a TSP type-1 1 domain in the interval 516-571; that stretch reads DGSWAKWDPYGPCSRTCGGGVQLARRQCTNPTPANGGKYCEGVRVKYRSCNLEPCP. N-linked (GlcNAc...) asparagine glycosylation is found at N591, N623, and N679. Positions 701 to 838 are spacer; sequence AIPAGASSID…SNQVEQPDDR (138 aa). The tract at residues 798–822 is disordered; that stretch reads FYLPKEPREDKSSHPKDPRGPSVLH. Positions 802–816 are enriched in basic and acidic residues; it reads KEPREDKSSHPKDPR. 2 consecutive TSP type-1 domains span residues 839–895 and 896–949; these read PPAR…EPCP and TWEL…VLRP.

It depends on Zn(2+) as a cofactor. The precursor is cleaved by a furin endopeptidase. In terms of processing, glycosylated. Can be O-fucosylated by POFUT2 on a serine or a threonine residue found within the consensus sequence C1-X(2)-(S/T)-C2-G of the TSP type-1 repeat domains where C1 and C2 are the first and second cysteine residue of the repeat, respectively. Fucosylated repeats can then be further glycosylated by the addition of a beta-1,3-glucose residue by the glucosyltransferase, B3GALTL. Fucosylation mediates the efficient secretion of ADAMTS family members. Can be C-glycosylated with one or two mannose molecules on tryptophan residues within the consensus sequence W-X-X-W of the TPRs. Also N-glycosylated. These other glycosylations can also facilitate secretion. As to expression, expressed in fetal liver and kidney, but not in any of the adult tissues examined.

The protein resides in the secreted. It is found in the extracellular space. Its subcellular location is the extracellular matrix. It localises to the cell surface. In terms of biological role, metalloprotease which has proteolytic activity against the proteoglycan VCAN, cleaving it at the 'Glu-1428-|-1429-Ala' site. Cleaves VCAN in the pericellular matrix surrounding myoblasts, facilitating myoblast contact and fusion which is required for skeletal muscle development and regeneration. This is A disintegrin and metalloproteinase with thrombospondin motifs 15 (ADAMTS15) from Homo sapiens (Human).